Here is a 177-residue protein sequence, read N- to C-terminus: Large ribosomal subunit protein uL6 (177 aa).

Basic and acidic residues predominate over residues 152 to 171; that stretch reads RPPEPYKGKGVRYDDEEVRR. Residues 152–177 are disordered; that stretch reads RPPEPYKGKGVRYDDEEVRRKEAKKK.

This sequence belongs to the universal ribosomal protein uL6 family. As to quaternary structure, part of the 50S ribosomal subunit.

This protein binds to the 23S rRNA, and is important in its secondary structure. It is located near the subunit interface in the base of the L7/L12 stalk, and near the tRNA binding site of the peptidyltransferase center. This Shewanella sp. (strain MR-4) protein is Large ribosomal subunit protein uL6.